A 723-amino-acid chain; its full sequence is UPF0313 protein YgiQ (723 aa).

A Radical SAM core domain is found at 372 to 650 (AYEMIRFSIN…KALLRYHDPA (279 aa)). The [4Fe-4S] cluster site is built by C386, C390, and C393. The interval 686–723 (EARRQNRNTRPALTKHTPVEHQRQGLAANKKRGKGAGR) is disordered. Residues 714 to 723 (NKKRGKGAGR) show a composition bias toward basic residues.

It belongs to the UPF0313 family. The cofactor is [4Fe-4S] cluster.

This chain is UPF0313 protein YgiQ, found in Salmonella typhimurium (strain LT2 / SGSC1412 / ATCC 700720).